The chain runs to 304 residues: Ferrochelatase (304 aa).

His-169 and Glu-241 together coordinate Fe cation.

It belongs to the ferrochelatase family.

It is found in the cytoplasm. The enzyme catalyses heme b + 2 H(+) = protoporphyrin IX + Fe(2+). It participates in porphyrin-containing compound metabolism; protoheme biosynthesis; protoheme from protoporphyrin-IX: step 1/1. In terms of biological role, catalyzes the ferrous insertion into protoporphyrin IX. This Thermoplasma volcanium (strain ATCC 51530 / DSM 4299 / JCM 9571 / NBRC 15438 / GSS1) protein is Ferrochelatase.